We begin with the raw amino-acid sequence, 289 residues long: Mas-related G-protein coupled receptor member G (289 aa).

The Extracellular portion of the chain corresponds to Met1–Lys13. A helical transmembrane segment spans residues Val14 to Leu34. Residues Trp35–His52 are Cytoplasmic-facing. The chain crosses the membrane as a helical span at residues Leu53–Val73. Residues Ser74–Asp78 lie on the Extracellular side of the membrane. A helical transmembrane segment spans residues Thr79 to Phe99. Over Ser100–Arg120 the chain is Cytoplasmic. The chain crosses the membrane as a helical span at residues Phe121–Pro141. Over Ala142–Ser164 the chain is Extracellular. Residues Val165–Phe185 form a helical membrane-spanning segment. At Gly186–Lys199 the chain is on the cytoplasmic side. Residues Leu200–Cys220 traverse the membrane as a helical segment. The Extracellular portion of the chain corresponds to Leu221–Arg222. The chain crosses the membrane as a helical span at residues Pro223 to Asp243. Over Ser244–Val289 the chain is Cytoplasmic.

Belongs to the G-protein coupled receptor 1 family. Mas subfamily.

It is found in the cell membrane. Orphan receptor. May regulate nociceptor function and/or development, including the sensation or modulation of pain. The protein is Mas-related G-protein coupled receptor member G (Mrgprg) of Mus musculus (Mouse).